The primary structure comprises 339 residues: UDP-N-acetylenolpyruvoylglucosamine reductase (339 aa).

One can recognise an FAD-binding PCMH-type domain in the interval 18–189; the sequence is GVEVKAKWFA…LRVRFALNRV (172 aa). Residue Arg-166 is part of the active site. The Proton donor role is filled by Ser-239. Glu-335 is an active-site residue.

This sequence belongs to the MurB family. It depends on FAD as a cofactor.

Its subcellular location is the cytoplasm. It carries out the reaction UDP-N-acetyl-alpha-D-muramate + NADP(+) = UDP-N-acetyl-3-O-(1-carboxyvinyl)-alpha-D-glucosamine + NADPH + H(+). Its pathway is cell wall biogenesis; peptidoglycan biosynthesis. In terms of biological role, cell wall formation. The polypeptide is UDP-N-acetylenolpyruvoylglucosamine reductase (Pseudomonas fluorescens (strain ATCC BAA-477 / NRRL B-23932 / Pf-5)).